The sequence spans 655 residues: Ubiquilin-3 (655 aa).

The region spanning 22-98 is the Ubiquitin-like domain; sequence IKVTVKTPKD…LVIKRQHRAM (77 aa). The segment at 102 to 124 is disordered; sequence CPAASVPTQGPSPGSLPQPSSIY. The span at 110–122 shows a compositional bias: low complexity; that stretch reads QGPSPGSLPQPSS. Residues 194 to 233 form the STI1 domain; it reads NPHMQQLIQHNPEIGHILNNPEIMRQTLEFLRNPAMMQEM. 3 disordered regions span residues 277–330, 364–399, and 412–447; these read PFAT…PDIR, ASALSQSQEPPPSVNRVPPSSPSSQEPGSGQPLPEE, and FLRYPTENSTGQGGDQDGAGKSSTGHSTNLPDLVSG. Over residues 279-290 the composition is skewed to low complexity; that stretch reads ATATTDNATTTT. Basic and acidic residues predominate over residues 318-330; sequence GRQDGDQDAPDIR. Residues 377 to 395 show a composition bias toward low complexity; sequence VNRVPPSSPSSQEPGSGQP. Polar residues predominate over residues 432–441; sequence KSSTGHSTNL. Residues 609–655 form the UBA domain; sequence QLQPEAHFQVQLEQLRSMGFLNREANLQALIATGGDVDAAVEKLRQS.

In terms of tissue distribution, testis specific.

This chain is Ubiquilin-3 (UBQLN3), found in Homo sapiens (Human).